Here is a 177-residue protein sequence, read N- to C-terminus: Bifunctional protein PyrR (177 aa).

The PRPP-binding signature appears at V99 to T111.

The protein belongs to the purine/pyrimidine phosphoribosyltransferase family. PyrR subfamily. In terms of assembly, homodimer and homohexamer; in equilibrium.

It carries out the reaction UMP + diphosphate = 5-phospho-alpha-D-ribose 1-diphosphate + uracil. In terms of biological role, regulates transcriptional attenuation of the pyrimidine nucleotide (pyr) operon by binding in a uridine-dependent manner to specific sites on pyr mRNA. This disrupts an antiterminator hairpin in the RNA and favors formation of a downstream transcription terminator, leading to a reduced expression of downstream genes. Also displays a weak uracil phosphoribosyltransferase activity which is not physiologically significant. This Pediococcus pentosaceus (strain ATCC 25745 / CCUG 21536 / LMG 10740 / 183-1w) protein is Bifunctional protein PyrR.